Reading from the N-terminus, the 868-residue chain is Leucine--tRNA ligase (868 aa).

The 'HIGH' region motif lies at 42–52 (PYPSGKLHMGH). The short motif at 627 to 631 (KMSKS) is the 'KMSKS' region element. K630 contacts ATP.

It belongs to the class-I aminoacyl-tRNA synthetase family.

It localises to the cytoplasm. It catalyses the reaction tRNA(Leu) + L-leucine + ATP = L-leucyl-tRNA(Leu) + AMP + diphosphate. The polypeptide is Leucine--tRNA ligase (Pseudomonas syringae pv. syringae (strain B728a)).